The following is a 1023-amino-acid chain: 2-oxoglutarate dehydrogenase complex component E1 (1023 aa).

Residues 1 to 40 (MFHLRTCAAKLRPLTASQTVKTFSQNRPAAARTFQQIRCY) constitute a mitochondrion transit peptide. Lys-74 is modified (N6-succinyllysine). Ser-100 is subject to Phosphoserine. Residues His-143, Asp-156, and Asp-158 each contribute to the Ca(2+) site. Arg-312 contacts thiamine diphosphate. Position 401 is an N6-acetyllysine (Lys-401). The thiamine diphosphate site is built by Asp-411, Asn-444, and Ile-446. 3 residues coordinate Mg(2+): Asp-411, Asn-444, and Ile-446. Lys-534 participates in a covalent cross-link: Glycyl lysine isopeptide (Lys-Gly) (interchain with G-Cter in ubiquitin). Lys-564 carries the post-translational modification N6-succinyllysine. Gln-676 provides a ligand contact to thiamine diphosphate. N6-acetyllysine is present on Lys-970.

It belongs to the alpha-ketoglutarate dehydrogenase family. Homodimer. The 2-oxoglutarate dehydrogenase complex is composed of OGDH (2-oxoglutarate dehydrogenase; E1), DLST (dihydrolipoamide succinyltransferase; E2), DLD (dihydrolipoamide dehydrogenase; E3) and the assembly factor KGD4. It contains multiple copies of the three enzymatic components (E1, E2 and E3). In the nucleus, the 2-oxoglutarate dehydrogenase complex associates with KAT2A. Interacts with ABHD11; this interaction maintains the functional lipoylation of the 2-oxoglutarate dehydrogenase complex. Requires thiamine diphosphate as cofactor. The cofactor is Mg(2+).

Its subcellular location is the mitochondrion. It is found in the nucleus. It carries out the reaction N(6)-[(R)-lipoyl]-L-lysyl-[protein] + 2-oxoglutarate + H(+) = N(6)-[(R)-S(8)-succinyldihydrolipoyl]-L-lysyl-[protein] + CO2. Its activity is regulated as follows. Calcium ions and ADP stimulate, whereas ATP and NADH reduce catalytic activity. Functionally, 2-oxoglutarate dehydrogenase (E1o) component of the 2-oxoglutarate dehydrogenase complex (OGDHC). Participates in the first step, rate limiting for the overall conversion of 2-oxoglutarate to succinyl-CoA and CO(2) catalyzed by the whole OGDHC. Catalyzes the irreversible decarboxylation of 2-oxoglutarate (alpha-ketoglutarate) via the thiamine diphosphate (ThDP) cofactor and subsequent transfer of the decarboxylated acyl intermediate on an oxidized dihydrolipoyl group that is covalently amidated to the E2 enzyme (dihydrolipoyllysine-residue succinyltransferase or DLST). Plays a key role in the Krebs (citric acid) cycle, which is a common pathway for oxidation of fuel molecules, including carbohydrates, fatty acids, and amino acids. Can catalyze the decarboxylation of 2-oxoadipate in vitro, but at a much lower rate than 2-oxoglutarate. Mainly active in the mitochondrion. A fraction of the 2-oxoglutarate dehydrogenase complex also localizes in the nucleus and is required for lysine succinylation of histones: associates with KAT2A on chromatin and provides succinyl-CoA to histone succinyltransferase KAT2A. In Macaca fascicularis (Crab-eating macaque), this protein is 2-oxoglutarate dehydrogenase complex component E1.